The sequence spans 655 residues: Threonine--tRNA ligase (655 aa).

The region spanning 1 to 66 (MIDLVFPDGS…TGERKFEILT (66 aa)) is the TGS domain. Residues 248–540 (DHRKLGKTMD…LLENFAGALP (293 aa)) form a catalytic region. Residues cysteine 340, histidine 391, and histidine 517 each contribute to the Zn(2+) site.

It belongs to the class-II aminoacyl-tRNA synthetase family. As to quaternary structure, homodimer. Requires Zn(2+) as cofactor.

The protein resides in the cytoplasm. The catalysed reaction is tRNA(Thr) + L-threonine + ATP = L-threonyl-tRNA(Thr) + AMP + diphosphate + H(+). Functionally, catalyzes the attachment of threonine to tRNA(Thr) in a two-step reaction: L-threonine is first activated by ATP to form Thr-AMP and then transferred to the acceptor end of tRNA(Thr). Also edits incorrectly charged L-seryl-tRNA(Thr). In Caulobacter vibrioides (strain ATCC 19089 / CIP 103742 / CB 15) (Caulobacter crescentus), this protein is Threonine--tRNA ligase.